A 230-amino-acid polypeptide reads, in one-letter code: 2-C-methyl-D-erythritol 4-phosphate cytidylyltransferase (230 aa).

The protein belongs to the IspD/TarI cytidylyltransferase family. IspD subfamily.

The enzyme catalyses 2-C-methyl-D-erythritol 4-phosphate + CTP + H(+) = 4-CDP-2-C-methyl-D-erythritol + diphosphate. The protein operates within isoprenoid biosynthesis; isopentenyl diphosphate biosynthesis via DXP pathway; isopentenyl diphosphate from 1-deoxy-D-xylulose 5-phosphate: step 2/6. Its function is as follows. Catalyzes the formation of 4-diphosphocytidyl-2-C-methyl-D-erythritol from CTP and 2-C-methyl-D-erythritol 4-phosphate (MEP). The protein is 2-C-methyl-D-erythritol 4-phosphate cytidylyltransferase of Synechocystis sp. (strain ATCC 27184 / PCC 6803 / Kazusa).